The primary structure comprises 633 residues: ATP-dependent RNA helicase mrh4, mitochondrial (633 aa).

Residues 1 to 38 (MNRLGRLSLPLRPQVCLLCQTQATMSSPLAGWQAVRSM) constitute a mitochondrion transit peptide. Residues 50–115 (MVLSSNVDKS…KQKPDSPLYK (66 aa)) are disordered. The span at 52–63 (LSSNVDKSSLKQ) shows a compositional bias: polar residues. Residues 98–109 (RSGDSEDDKQKP) are compositionally biased toward basic and acidic residues. The short motif at 142–175 (SSFDQFPLLPVVRHSISSQALSRTGDIVPTPIQR) is the Q motif element. The 213-residue stretch at 195–407 (SDHEPNFEQY…RKRYPDIRRL (213 aa)) folds into the Helicase ATP-binding domain. ATP is bound at residue 208-215 (AETGSGKT). Residues 354–357 (DEAD) carry the DEAD box motif. Positions 458-633 (FLAQAGPKVK…EGMFRGQALI (176 aa)) constitute a Helicase C-terminal domain.

It belongs to the DEAD box helicase family. MRH4 subfamily.

Its subcellular location is the mitochondrion. The catalysed reaction is ATP + H2O = ADP + phosphate + H(+). In terms of biological role, ATP-binding RNA helicase involved in mitochondrial RNA metabolism. Required for maintenance of mitochondrial DNA. The chain is ATP-dependent RNA helicase mrh4, mitochondrial (mrh4) from Aspergillus niger (strain ATCC MYA-4892 / CBS 513.88 / FGSC A1513).